Consider the following 413-residue polypeptide: Divalent metal cation transporter MntH (413 aa).

At 1–19 (MTDNRVENSSGRAARKLRL) the chain is on the cytoplasmic side. The helical transmembrane segment at 20–39 (ALMGPAFIAAIGYIDPGNFA) threads the bilayer. The Periplasmic segment spans residues 40–51 (TNIQAGASFGYQ). Residues 52–71 (LLWVVVWANLMAMLIQILSA) form a helical membrane-spanning segment. The Cytoplasmic segment spans residues 72–95 (KLGIATGKNLAEQIRDHYPRPVVW). Residues 96–118 (FYWVQAEIIAMATDLAEFIGAAI) traverse the membrane as a helical segment. Residues 119–125 (GFKLILG) lie on the Periplasmic side of the membrane. A helical membrane pass occupies residues 126–145 (VSLLQGAVLTGIATFLILML). At 146–155 (QRRGQKPLEK) the chain is on the cytoplasmic side. Residues 156-175 (VIGGLLLFVAAAYIVELFFS) form a helical membrane-spanning segment. The Periplasmic portion of the chain corresponds to 176 to 196 (QPDMAQLGKGMVIPALPNPEA). A helical transmembrane segment spans residues 197–220 (VFLAAGVLGATIMPHVIYLHSSLT). Residues 221 to 238 (QHLHGGTRQQRYSATKWD) lie on the Cytoplasmic side of the membrane. A helical transmembrane segment spans residues 239 to 258 (VAIAMTIAGFVNLAMMATAA). The Periplasmic segment spans residues 259-276 (AAFHFSGHTGIADLDQAY). Residues 277–297 (LTLEPLLSHAAATVFGLSLVA) form a helical membrane-spanning segment. The Cytoplasmic portion of the chain corresponds to 298–327 (AGLSSTVVGTLAGQVVMQGFVRFHIPLWVR). Residues 328–344 (RSITMLPSFIVILMGLD) form a helical membrane-spanning segment. Over 345 to 350 (PTRILV) the chain is Periplasmic. The helical transmembrane segment at 351 to 370 (MSQVLLSFGIALALVPLLIF) threads the bilayer. Residues 371-387 (TSNATLMGELVNTRRVK) are Cytoplasmic-facing. A helical transmembrane segment spans residues 388 to 406 (QIGWIIVVLVVALNIWLLV). Residues 407–413 (GTVMGLS) are Periplasmic-facing.

This sequence belongs to the NRAMP family.

It localises to the cell inner membrane. H(+)-stimulated, divalent metal cation uptake system. This is Divalent metal cation transporter MntH from Salmonella gallinarum (strain 287/91 / NCTC 13346).